The primary structure comprises 174 residues: FMN reductase (NADH) SmoA (174 aa).

It belongs to the non-flavoprotein flavin reductase family.

It carries out the reaction FMNH2 + NAD(+) = FMN + NADH + 2 H(+). Functionally, part of the sulfoquinovose monooxygenase (sulfo-SMO) pathway, a D-sulfoquinovose degradation pathway that enables the complete utilization of all carbons within sulfoquinovose (SQ) with concomitant production of inorganic sulfite. Catalyzes the NADH-dependent reduction of FMN. FMNH(2) is then transferred to the sulfoquinovose monooxygenase SmoC. The sequence is that of FMN reductase (NADH) SmoA from Agrobacterium fabrum (strain C58 / ATCC 33970) (Agrobacterium tumefaciens (strain C58)).